A 160-amino-acid polypeptide reads, in one-letter code: Cytochrome b6-f complex subunit 4 (160 aa).

A run of 3 helical transmembrane segments spans residues 36 to 56, 95 to 115, and 131 to 151; these read LLYI…GLAV, LLGV…PFLE, and TVFL…TLPI.

Belongs to the cytochrome b family. PetD subfamily. In terms of assembly, the 4 large subunits of the cytochrome b6-f complex are cytochrome b6, subunit IV (17 kDa polypeptide, petD), cytochrome f and the Rieske protein, while the 4 small subunits are petG, petL, petM and petN. The complex functions as a dimer.

The protein localises to the plastid. The protein resides in the chloroplast thylakoid membrane. Its function is as follows. Component of the cytochrome b6-f complex, which mediates electron transfer between photosystem II (PSII) and photosystem I (PSI), cyclic electron flow around PSI, and state transitions. The protein is Cytochrome b6-f complex subunit 4 of Arabidopsis thaliana (Mouse-ear cress).